The following is a 409-amino-acid chain: Peptidase T (409 aa).

Residue His-78 coordinates Zn(2+). Residue Asp-80 is part of the active site. Residue Asp-140 coordinates Zn(2+). Glu-173 functions as the Proton acceptor in the catalytic mechanism. Glu-174, Asp-196, and His-379 together coordinate Zn(2+).

This sequence belongs to the peptidase M20B family. It depends on Zn(2+) as a cofactor.

It localises to the cytoplasm. It carries out the reaction Release of the N-terminal residue from a tripeptide.. In terms of biological role, cleaves the N-terminal amino acid of tripeptides. The polypeptide is Peptidase T (Salmonella agona (strain SL483)).